A 169-amino-acid chain; its full sequence is Endoribonuclease YbeY (169 aa).

H135, H139, and H145 together coordinate Zn(2+).

The protein belongs to the endoribonuclease YbeY family. Zn(2+) serves as cofactor.

It is found in the cytoplasm. Single strand-specific metallo-endoribonuclease involved in late-stage 70S ribosome quality control and in maturation of the 3' terminus of the 16S rRNA. This is Endoribonuclease YbeY from Lachnospira eligens (strain ATCC 27750 / DSM 3376 / VPI C15-48 / C15-B4) (Eubacterium eligens).